A 373-amino-acid polypeptide reads, in one-letter code: Glutamine synthetase (373 aa).

The residue at position 2 (Ala-2) is an N-acetylalanine. The required for glutamine-induced ubiquitination by CRL4(CRBN) and proteasomal degradation stretch occupies residues 2-25 (ATSASSHLNKGIKQMYMNLPQGEK). N6-acetyllysine is present on residues Lys-11 and Lys-14. Residues 24–106 (EKIQLMYIWV…VFCEVFKYNR (83 aa)) form the GS beta-grasp domain. At Tyr-104 the chain carries Phosphotyrosine. The GS catalytic domain maps to 113 to 373 (LRHSCKRIMD…TGDEPFQYKN (261 aa)). Glu-134 serves as a coordination point for ATP. The Mn(2+) site is built by Glu-134, Glu-136, Glu-196, and Glu-203. ATP is bound at residue 203–208 (EFQIGP). L-glutamate is bound at residue 246–247 (NW). A Mn(2+)-binding site is contributed by His-253. ATP is bound by residues 255–257 (NFS), Arg-319, and Arg-324. Residue Arg-319 participates in L-glutamate binding. Position 336–338 (336–338 (YFE)) interacts with ADP. Residue Glu-338 coordinates Mn(2+). L-glutamate is bound at residue Arg-340. The residue at position 343 (Ser-343) is a Phosphoserine.

Belongs to the glutamine synthetase family. Decamer; composed of two pentamers. Interacts with PALMD. Interacts with RHOJ. Interacts with BEST2; this interaction tethers a fraction of GLUL to the membrane, causing a decrease of cytosolic glutamine synthase (GS) activity and inhibits the chloride channel activity of BEST2 by affecting the gating at the aperture in the absence of intracellular glutamate. The cofactor is Mg(2+). Mn(2+) serves as cofactor. Palmitoylated; undergoes autopalmitoylation. Post-translationally, acetylated by EP300/p300; acetylation is stimulated by increased glutamine levels and promotes ubiquitin-mediated proteasomal degradation. In terms of processing, ubiquitinated by ZNRF1. Ubiquitinated by the DCX (DDB1-CUL4-X-box) E3 ubiquitin-protein ligase complex called CRL4(CRBN), leading to proteasomal degradation. In the adult liver, expression is restricted to a small population of hepatocytes which form only a small rim of one to three hepatocytes around the central veins. Expressed in lung microvascular endothelial cells.

The protein localises to the cytoplasm. The protein resides in the cytosol. It localises to the microsome. Its subcellular location is the mitochondrion. It is found in the cell membrane. It catalyses the reaction L-glutamate + NH4(+) + ATP = L-glutamine + ADP + phosphate + H(+). It carries out the reaction L-cysteinyl-[protein] + hexadecanoyl-CoA = S-hexadecanoyl-L-cysteinyl-[protein] + CoA. Its activity is regulated as follows. Glutamine synthetase activity is inhibited by methionine sulfoximine (MSO). Functionally, glutamine synthetase that catalyzes the ATP-dependent conversion of glutamate and ammonia to glutamine. Its role depends on tissue localization: in the brain, it regulates the levels of toxic ammonia and converts neurotoxic glutamate to harmless glutamine, whereas in the liver, it is one of the enzymes responsible for the removal of ammonia. Plays a key role in ammonium detoxification during erythropoiesis: the glutamine synthetase activity is required to remove ammonium generated by porphobilinogen deaminase (HMBS) during heme biosynthesis to prevent ammonium accumulation and oxidative stress. Essential for proliferation of fetal skin fibroblasts. Independently of its glutamine synthetase activity, required for endothelial cell migration during vascular development. Involved in angiogenesis by regulating membrane localization and activation of the GTPase RHOJ, possibly by promoting RHOJ palmitoylation. May act as a palmitoyltransferase for RHOJ: able to autopalmitoylate and then transfer the palmitoyl group to RHOJ. Plays a role in ribosomal 40S subunit biogenesis. Through the interaction with BEST2, inhibits BEST2 channel activity by affecting the gating at the aperture in the absence of intracellular L-glutamate, but sensitizes BEST2 to intracellular L-glutamate, which promotes the opening of BEST2 and thus relieves its inhibitory effect on BEST2. This chain is Glutamine synthetase, found in Rattus norvegicus (Rat).